Here is a 370-residue protein sequence, read N- to C-terminus: Histidinol-phosphate aminotransferase (370 aa).

Residue lysine 223 is modified to N6-(pyridoxal phosphate)lysine.

Belongs to the class-II pyridoxal-phosphate-dependent aminotransferase family. Histidinol-phosphate aminotransferase subfamily. As to quaternary structure, homodimer. Requires pyridoxal 5'-phosphate as cofactor.

The enzyme catalyses L-histidinol phosphate + 2-oxoglutarate = 3-(imidazol-4-yl)-2-oxopropyl phosphate + L-glutamate. It functions in the pathway amino-acid biosynthesis; L-histidine biosynthesis; L-histidine from 5-phospho-alpha-D-ribose 1-diphosphate: step 7/9. The protein is Histidinol-phosphate aminotransferase of Methylobacterium sp. (strain 4-46).